A 479-amino-acid polypeptide reads, in one-letter code: MSQNNEMHPRNPYRNKPPDFKALAVEYPEFRKFCQYVSNGKVTFDFKKDAAVRCLTQTLLKKDFNLDVEIPPGHLVPRVPQKLNYCLLIDDLLKANKLTKNVIGIDIGTGTSCIHALIGARQFNWKFIATDGDEKSVRVAHENVAKNGLSSSICVVHVNPDVKTVLMDVVNTIPDTDYAFCMCNPPFFEKGNGDDKFCEDISSSTETYSNRVASEFRTAPHSATFASSAELFVDGGEVAFVNRIIDDSVLLRDRIKIYTTMIGRKSSLKPLQNRLQRFGDDVKIMISVLNQGKTKRWMLAWTFSKSVSLTTIDRPISFQCPKPGLTRLMQEISILNGRLRQEDTLAIVAEFKCVTWTNQRARKRAKAILSESSIKKAKWNFSNVACQVAFGAGDGKDSYTDAGNFVSSESIPTNNLNAWDNASQAYFPLPNGEVPGPIIRIRIQVFSEDSYDSISFELISGSKQHLHQLVQYLKNLICR.

Residues K82, G108, D131, T164, and N184 each contribute to the S-adenosyl-L-methionine site. The tract at residues 420-424 is involved in dlc-1 binding; sequence DNASQ.

The protein belongs to the methyltransferase superfamily. METTL16/RlmF family. In terms of assembly, self-associates. Interacts with dlc-1; the interaction is direct, and is required for nuclear localization of mett-10. As to expression, expressed in the intestine, vulva, and cells of the somatic gonad including distal tip cells, gonadal sheath cells and spermatheca.

It is found in the nucleus. It carries out the reaction an adenosine in mRNA + S-adenosyl-L-methionine = an N(6)-methyladenosine in mRNA + S-adenosyl-L-homocysteine + H(+). The enzyme catalyses adenosine in U6 snRNA + S-adenosyl-L-methionine = N(6)-methyladenosine in U6 snRNA + S-adenosyl-L-homocysteine + H(+). RNA N6-methyltransferase that methylates adenosine residues at the N(6) position of a subset of RNAs and is involved in S-adenosyl-L-methionine homeostasis by regulating splicing of S-adenosylmethionine synthase transcripts (sams-3, sams-4 and sams-5). Able to N6-methylate a subset of mRNAs containing the 5'UACAGAAAC-3' nonamer sequence. Plays a key role in S-adenosyl-L-methionine homeostasis: under rich-diet conditions, catalyzes N6-methylation of S-adenosylmethionine synthase mRNAs (sams-3, sams-4 and sams-5), directly inhibiting splicing and protein production of S-adenosylmethionine synthase. In addition to mRNAs, also able to mediate N6-methylation of U6 small nuclear RNA (U6 snRNA). Required for gamete production, inhibiting germ cell proliferative fate and ensuring germ cell meiotic development. Also promotes progression of the mitotic cell cycle in those germ cells that continue to proliferate. Plays a role in the development of the vulva, somatic gonad and embryo. The sequence is that of U6 small nuclear RNA (adenine-(43)-N(6))-methyltransferase from Caenorhabditis elegans.